Reading from the N-terminus, the 217-residue chain is GrpE protein homolog 1, mitochondrial (217 aa).

Residues 1 to 27 constitute a mitochondrion transit peptide; the sequence is MAARCVRLARRSLPALALSFRPSPRLL. A disordered region spans residues 37-56; it reads GQNLDEDLGHCEPKTDPPSA. At Lys-94 the chain carries N6-acetyllysine; alternate. At Lys-94 the chain carries N6-succinyllysine; alternate. Residue Lys-100 is modified to N6-acetyllysine. An N6-succinyllysine modification is found at Lys-120. An N6-acetyllysine; alternate modification is found at Lys-215. Lys-215 bears the N6-succinyllysine; alternate mark.

The protein belongs to the GrpE family. As to quaternary structure, probable component of the PAM complex at least composed of a mitochondrial HSP70 protein, GRPEL1 or GRPEL2, TIMM44, TIMM16/PAM16 and TIMM14/DNAJC19. Binds to HSP70, HSC70 and HSJ1B.

It localises to the mitochondrion matrix. In terms of biological role, essential component of the PAM complex, a complex required for the translocation of transit peptide-containing proteins from the inner membrane into the mitochondrial matrix in an ATP-dependent manner. Seems to control the nucleotide-dependent binding of mitochondrial HSP70 to substrate proteins. The chain is GrpE protein homolog 1, mitochondrial (Grpel1) from Mus musculus (Mouse).